Here is a 337-residue protein sequence, read N- to C-terminus: ERI1 exoribonuclease 3 (337 aa).

The region spanning Phe-146 to Met-320 is the Exonuclease domain. Mg(2+) contacts are provided by Asp-150, Glu-152, and Asp-249. Glu-152 functions as the Proton acceptor in the catalytic mechanism. Residue Glu-152 coordinates AMP. His-307 functions as the Proton acceptor in the catalytic mechanism. His-307 provides a ligand contact to AMP. Residue Asp-312 coordinates Mg(2+).

In terms of assembly, interacts with PRNP. Requires Mg(2+) as cofactor.

This is ERI1 exoribonuclease 3 (ERI3) from Homo sapiens (Human).